We begin with the raw amino-acid sequence, 390 residues long: Galactokinase (390 aa).

Substrate is bound at residue 34–37 (EHTD). ATP contacts are provided by residues S68 and 122–128 (GSGLSSS). Mg(2+) contacts are provided by S128 and E160. D172 functions as the Proton acceptor in the catalytic mechanism. Y221 lines the substrate pocket.

The protein belongs to the GHMP kinase family. GalK subfamily.

It localises to the cytoplasm. It catalyses the reaction alpha-D-galactose + ATP = alpha-D-galactose 1-phosphate + ADP + H(+). Its pathway is carbohydrate metabolism; galactose metabolism. Its function is as follows. Catalyzes the transfer of the gamma-phosphate of ATP to D-galactose to form alpha-D-galactose-1-phosphate (Gal-1-P). This is Galactokinase from Chloroflexus aurantiacus (strain ATCC 29366 / DSM 635 / J-10-fl).